The primary structure comprises 105 residues: uncharacterized protein (105 aa).

It is found in the plastid. This is an uncharacterized protein from Euglena longa (Euglenophycean alga).